We begin with the raw amino-acid sequence, 271 residues long: Phospholipid scramblase family member 5 (271 aa).

Residues 1 to 10 (MASKDAQNQR) are compositionally biased toward polar residues. A disordered region spans residues 1-33 (MASKDAQNQRRGLPGFLPGAPDPDQSLPASSNP). Positions 1-45 (MASKDAQNQRRGLPGFLPGAPDPDQSLPASSNPGNQAWQLSLPLP) are proline-rich domain (PRD).

Belongs to the phospholipid scramblase family.

This chain is Phospholipid scramblase family member 5 (PLSCR5), found in Homo sapiens (Human).